Reading from the N-terminus, the 92-residue chain is Small ribosomal subunit protein uS19c (92 aa).

Belongs to the universal ribosomal protein uS19 family.

It is found in the plastid. The protein localises to the chloroplast. Protein S19 forms a complex with S13 that binds strongly to the 16S ribosomal RNA. This is Small ribosomal subunit protein uS19c from Chlorokybus atmophyticus (Soil alga).